Reading from the N-terminus, the 207-residue chain is MTTIAVVPVQRLSTAKSRLAARLAPDERRTLVLSLLDHVLTALNAARQVDAVILVSPDPEVLEHAARRGAIALLQPGVGLNEGLRLGRDEALRRGADTLLIVLADLPWITADEIDALVAALPERGIALAPDRHDHGTNAAALRPPDAIEPAFGAGSFARHQAQARSRGLPLRELRVQGLAFDIDTPADLEELAGHAPVGASSDESGT.

Residues Thr-137, Gly-153, and Ser-156 each contribute to the phosphoenolpyruvate site.

This sequence belongs to the CofC family.

It catalyses the reaction phosphoenolpyruvate + GTP + H(+) = enolpyruvoyl-2-diphospho-5'-guanosine + diphosphate. It participates in cofactor biosynthesis; coenzyme F420 biosynthesis. Its function is as follows. Guanylyltransferase that catalyzes the activation of phosphoenolpyruvate (PEP) as enolpyruvoyl-2-diphospho-5'-guanosine, via the condensation of PEP with GTP. It is involved in the biosynthesis of coenzyme F420, a hydride carrier cofactor. The sequence is that of Phosphoenolpyruvate guanylyltransferase from Sphaerobacter thermophilus (strain ATCC 49802 / DSM 20745 / KCCM 41009 / NCIMB 13125 / S 6022).